Here is a 203-residue protein sequence, read N- to C-terminus: 3-isopropylmalate dehydratase small subunit (203 aa).

This sequence belongs to the LeuD family. LeuD type 1 subfamily. Heterodimer of LeuC and LeuD.

It carries out the reaction (2R,3S)-3-isopropylmalate = (2S)-2-isopropylmalate. The protein operates within amino-acid biosynthesis; L-leucine biosynthesis; L-leucine from 3-methyl-2-oxobutanoate: step 2/4. In terms of biological role, catalyzes the isomerization between 2-isopropylmalate and 3-isopropylmalate, via the formation of 2-isopropylmaleate. The protein is 3-isopropylmalate dehydratase small subunit of Rhodospirillum centenum (strain ATCC 51521 / SW).